Here is a 173-residue protein sequence, read N- to C-terminus: 6,7-dimethyl-8-ribityllumazine synthase (173 aa).

5-amino-6-(D-ribitylamino)uracil contacts are provided by residues Phe24, Ala58–Glu60, and Ala82–Ile84. Glu87–Thr88 is a binding site for (2S)-2-hydroxy-3-oxobutyl phosphate. The active-site Proton donor is His90. Position 115 (Asn115) interacts with 5-amino-6-(D-ribitylamino)uracil. Residue Arg129 coordinates (2S)-2-hydroxy-3-oxobutyl phosphate. The segment at Thr150 to Ala173 is disordered. Over residues Leu154 to Ala173 the composition is skewed to acidic residues.

It belongs to the DMRL synthase family.

It catalyses the reaction (2S)-2-hydroxy-3-oxobutyl phosphate + 5-amino-6-(D-ribitylamino)uracil = 6,7-dimethyl-8-(1-D-ribityl)lumazine + phosphate + 2 H2O + H(+). Its pathway is cofactor biosynthesis; riboflavin biosynthesis; riboflavin from 2-hydroxy-3-oxobutyl phosphate and 5-amino-6-(D-ribitylamino)uracil: step 1/2. Functionally, catalyzes the formation of 6,7-dimethyl-8-ribityllumazine by condensation of 5-amino-6-(D-ribitylamino)uracil with 3,4-dihydroxy-2-butanone 4-phosphate. This is the penultimate step in the biosynthesis of riboflavin. In Burkholderia mallei (strain NCTC 10247), this protein is 6,7-dimethyl-8-ribityllumazine synthase.